We begin with the raw amino-acid sequence, 219 residues long: Cytidylate kinase (219 aa).

10–18 is an ATP binding site; it reads GPAAAGKST.

This sequence belongs to the cytidylate kinase family. Type 1 subfamily.

The protein resides in the cytoplasm. It carries out the reaction CMP + ATP = CDP + ADP. It catalyses the reaction dCMP + ATP = dCDP + ADP. The protein is Cytidylate kinase of Staphylococcus aureus (strain MRSA252).